The sequence spans 173 residues: Eggshell protein (173 aa).

An N-terminal signal peptide occupies residues 1–18 (MKQSLTLVFLVAIGYATA). Positions 145–162 (GSGKGKGGGKGGKGGKGG) are enriched in gly residues. A disordered region spans residues 145–173 (GSGKGKGGGKGGKGGKGGTYKPSHYGGGY).

This chain is Eggshell protein, found in Schistosoma mansoni (Blood fluke).